Consider the following 130-residue polypeptide: Ribosome-binding factor A (130 aa).

This sequence belongs to the RbfA family. In terms of assembly, monomer. Binds 30S ribosomal subunits, but not 50S ribosomal subunits or 70S ribosomes.

The protein resides in the cytoplasm. One of several proteins that assist in the late maturation steps of the functional core of the 30S ribosomal subunit. Associates with free 30S ribosomal subunits (but not with 30S subunits that are part of 70S ribosomes or polysomes). Required for efficient processing of 16S rRNA. May interact with the 5'-terminal helix region of 16S rRNA. The polypeptide is Ribosome-binding factor A (Prochlorococcus marinus (strain MIT 9301)).